Here is a 598-residue protein sequence, read N- to C-terminus: Beta-myrcene/(E)-beta-ocimene synthase 2, chloroplastic (598 aa).

The N-terminal 30 residues, 1-30 (MATLCIGSAPIYQNACIHNFRLQRPRRFIS), are a transit peptide targeting the chloroplast. Residues Arg-307, Asp-344, Asp-348, Arg-486, and Asn-489 each coordinate (2E)-geranyl diphosphate. Mg(2+)-binding residues include Asp-344 and Asp-348. The short motif at 344-348 (DDIYD) is the DDXXD motif element. Residues Asn-489, Thr-493, and Glu-497 each coordinate Mg(2+).

It belongs to the terpene synthase family. Tpsb subfamily. The cofactor is Mg(2+). It depends on Mn(2+) as a cofactor. Expressed exclusively in mature flowers, but not in inmmature buds.

It is found in the plastid. The protein localises to the chloroplast. It carries out the reaction (2E)-geranyl diphosphate = beta-myrcene + diphosphate. It functions in the pathway secondary metabolite biosynthesis; terpenoid biosynthesis. In terms of biological role, involved in monoterpene (C10) biosynthesis. The major products are alpha- and beta-pinene, sabinene, beta-myrcene, (E)-beta-ocimene and limonene. This Arabidopsis thaliana (Mouse-ear cress) protein is Beta-myrcene/(E)-beta-ocimene synthase 2, chloroplastic (TPS24).